The chain runs to 638 residues: Carbon monoxide dehydrogenase (638 aa).

The [4Fe-4S] cluster site is built by cysteine 46, cysteine 55, cysteine 58, cysteine 63, and cysteine 74. Histidine 265, cysteine 299, cysteine 343, cysteine 452, cysteine 483, and cysteine 524 together coordinate [Ni-4Fe-5S] cluster.

The protein belongs to the Ni-containing carbon monoxide dehydrogenase family. Homodimer. [4Fe-4S] cluster serves as cofactor. It depends on [Ni-4Fe-5S] cluster as a cofactor.

The enzyme catalyses CO + 2 oxidized [2Fe-2S]-[ferredoxin] + H2O = 2 reduced [2Fe-2S]-[ferredoxin] + CO2 + 2 H(+). Functionally, CODH oxidizes carbon monoxide coupled, via CooF, to the reduction of a hydrogen cation by a hydrogenase (possibly CooH). The polypeptide is Carbon monoxide dehydrogenase (cooS) (Methanopyrus kandleri (strain AV19 / DSM 6324 / JCM 9639 / NBRC 100938)).